The sequence spans 230 residues: tRNA (guanine-N(1)-)-methyltransferase (230 aa).

Residues G114 and 138–143 (IGDYVL) contribute to the S-adenosyl-L-methionine site.

This sequence belongs to the RNA methyltransferase TrmD family. As to quaternary structure, homodimer.

The protein localises to the cytoplasm. It catalyses the reaction guanosine(37) in tRNA + S-adenosyl-L-methionine = N(1)-methylguanosine(37) in tRNA + S-adenosyl-L-homocysteine + H(+). In terms of biological role, specifically methylates guanosine-37 in various tRNAs. The chain is tRNA (guanine-N(1)-)-methyltransferase from Rhodococcus jostii (strain RHA1).